Reading from the N-terminus, the 132-residue chain is Dinoflagellate viral nucleoprotein 5 (132 aa).

The segment covering 1-44 has biased composition (basic residues); it reads MAAMKKAMKVKKSAKKSAKKSGKKGGMKKKAKRVSKVARGKRAK. Residues 1–84 are disordered; it reads MAAMKKAMKV…KKQSEHGKKI (84 aa). Polar residues predominate over residues 57 to 66; sequence GGLTKNSLVK.

Post-translationally, phosphorylated.

Its subcellular location is the nucleus. It localises to the chromosome. Its function is as follows. DNA-binding protein, which similarly to histones, may compact DNA into chromatin. This is Dinoflagellate viral nucleoprotein 5 from Hematodinium sp.